Consider the following 229-residue polypeptide: Bcl-2-like protein 1 (229 aa).

Residues 4-24 (SNRELVIDFVSYKLSQRGHCW) carry the BH4 motif. Positions 82–96 (VRQALRDAGDEFELR) match the BH3 motif. A BH1 motif is present at residues 125–144 (ELFHDGVNWGRIVAFFSFGG). The BH2 signature appears at 176-191 (PWIQENGGWERFVDLY). A helical transmembrane segment spans residues 206-223 (FNKWLLTGATVAGVLLLG).

Belongs to the Bcl-2 family. As to expression, highest expression in organs with lymphoid development.

It localises to the mitochondrion membrane. Its subcellular location is the nucleus membrane. The protein resides in the mitochondrion matrix. It is found in the cytoplasm. The protein localises to the cytoskeleton. It localises to the microtubule organizing center. Its subcellular location is the centrosome. The protein resides in the cytosol. It is found in the cytoplasmic vesicle. The protein localises to the secretory vesicle. It localises to the synaptic vesicle membrane. Functionally, dominant regulator of apoptotic cell death. The long form displays cell death repressor activity, whereas the short isoform promotes apoptosis. Also acts as a regulator of G2 checkpoint and progression to cytokinesis during mitosis. This chain is Bcl-2-like protein 1 (BCL2L1), found in Gallus gallus (Chicken).